The following is a 359-amino-acid chain: Peptide chain release factor 1 (359 aa).

Gln235 carries the N5-methylglutamine modification. The interval 283 to 309 is disordered; it reads QKAESERSQARRSQVGSGDRSERIRTY.

Belongs to the prokaryotic/mitochondrial release factor family. Methylated by PrmC. Methylation increases the termination efficiency of RF1.

The protein resides in the cytoplasm. Functionally, peptide chain release factor 1 directs the termination of translation in response to the peptide chain termination codons UAG and UAA. This is Peptide chain release factor 1 from Brucella canis (strain ATCC 23365 / NCTC 10854 / RM-666).